Consider the following 128-residue polypeptide: Holo-[acyl-carrier-protein] synthase (128 aa).

The Mg(2+) site is built by Asp-10 and Glu-59.

This sequence belongs to the P-Pant transferase superfamily. AcpS family. Requires Mg(2+) as cofactor.

It is found in the cytoplasm. The catalysed reaction is apo-[ACP] + CoA = holo-[ACP] + adenosine 3',5'-bisphosphate + H(+). Functionally, transfers the 4'-phosphopantetheine moiety from coenzyme A to a Ser of acyl-carrier-protein. This Syntrophotalea carbinolica (strain DSM 2380 / NBRC 103641 / GraBd1) (Pelobacter carbinolicus) protein is Holo-[acyl-carrier-protein] synthase.